Reading from the N-terminus, the 304-residue chain is Pyridoxal 5'-phosphate synthase subunit pyroA (304 aa).

Residue Asp-28 participates in D-ribose 5-phosphate binding. The active-site Schiff-base intermediate with D-ribose 5-phosphate is the Lys-85. Gly-157 provides a ligand contact to D-ribose 5-phosphate. Arg-169 is a D-glyceraldehyde 3-phosphate binding site. D-ribose 5-phosphate contacts are provided by residues Gly-224 and Gly-245 to Ser-246.

This sequence belongs to the PdxS/SNZ family.

The catalysed reaction is aldehydo-D-ribose 5-phosphate + D-glyceraldehyde 3-phosphate + L-glutamine = pyridoxal 5'-phosphate + L-glutamate + phosphate + 3 H2O + H(+). Its pathway is cofactor biosynthesis; pyridoxal 5'-phosphate biosynthesis. In terms of biological role, catalyzes the formation of pyridoxal 5'-phosphate from ribose 5-phosphate (RBP), glyceraldehyde 3-phosphate (G3P) and ammonia. The ammonia is provided by PDX2. Can also use ribulose 5-phosphate and dihydroxyacetone phosphate as substrates, resulting from enzyme-catalyzed isomerization of RBP and G3P, respectively. Also plays an indirect role in resistance to singlet oxygen-generating photosensitizers. In Emericella nidulans (strain FGSC A4 / ATCC 38163 / CBS 112.46 / NRRL 194 / M139) (Aspergillus nidulans), this protein is Pyridoxal 5'-phosphate synthase subunit pyroA (pyroA).